The following is a 94-amino-acid chain: Pyrimidine/purine nucleoside phosphorylase (94 aa).

The protein belongs to the nucleoside phosphorylase PpnP family.

The enzyme catalyses a purine D-ribonucleoside + phosphate = a purine nucleobase + alpha-D-ribose 1-phosphate. It carries out the reaction adenosine + phosphate = alpha-D-ribose 1-phosphate + adenine. It catalyses the reaction cytidine + phosphate = cytosine + alpha-D-ribose 1-phosphate. The catalysed reaction is guanosine + phosphate = alpha-D-ribose 1-phosphate + guanine. The enzyme catalyses inosine + phosphate = alpha-D-ribose 1-phosphate + hypoxanthine. It carries out the reaction thymidine + phosphate = 2-deoxy-alpha-D-ribose 1-phosphate + thymine. It catalyses the reaction uridine + phosphate = alpha-D-ribose 1-phosphate + uracil. The catalysed reaction is xanthosine + phosphate = alpha-D-ribose 1-phosphate + xanthine. Its function is as follows. Catalyzes the phosphorolysis of diverse nucleosides, yielding D-ribose 1-phosphate and the respective free bases. Can use uridine, adenosine, guanosine, cytidine, thymidine, inosine and xanthosine as substrates. Also catalyzes the reverse reactions. The sequence is that of Pyrimidine/purine nucleoside phosphorylase from Salmonella paratyphi C (strain RKS4594).